We begin with the raw amino-acid sequence, 373 residues long: P2Y purinoceptor 2 (373 aa).

Residues 1–32 lie on the Extracellular side of the membrane; the sequence is MAADLEPWNSTINGTWEGDELGYKCRFNEDFK. N-linked (GlcNAc...) asparagine glycans are attached at residues asparagine 9 and asparagine 13. The chain crosses the membrane as a helical span at residues 33–59; that stretch reads YVLLPVSYGVVCVLGLCLNVVALYIFL. Residues 60–70 are Cytoplasmic-facing; sequence CRLKTWNASTT. The helical transmembrane segment at 71-93 threads the bilayer; the sequence is YMFHLAVSDSLYAASLPLLVYYY. The Extracellular segment spans residues 94–110; the sequence is ARGDHWPFSTVLCKLVR. A disulfide bridge links cysteine 106 with cysteine 183. Residues 111-129 form a helical membrane-spanning segment; it reads FLFYTNLYCSILFLTCISV. The Cytoplasmic segment spans residues 130-152; sequence HRCLGVLRPLHSLRWGRARYARR. A helical transmembrane segment spans residues 153–172; the sequence is VAAVVWVLVLACQAPVLYFV. The Extracellular segment spans residues 173-194; the sequence is TTSVRGTRITCHDTSARELFSH. Residues 195–220 form a helical membrane-spanning segment; sequence FVAYSSVMLGLLFAVPFSVILVCYVL. The Cytoplasmic segment spans residues 221–246; it reads MARRLLKPAYGTTGGLPRAKRKSVRT. Residues 247–269 form a helical membrane-spanning segment; sequence IALVLAVFALCFLPFHVTRTLYY. Residues 270–287 lie on the Extracellular side of the membrane; the sequence is SFRSLDLSCHTLNAINMA. The helical transmembrane segment at 288 to 309 threads the bilayer; the sequence is YKITRPLASANSCLDPVLYFLA. Residues 310–373 lie on the Cytoplasmic side of the membrane; it reads GQRLVRFARD…AGSETKDIRL (64 aa). Residues 318–373 form a disordered region; that stretch reads RDAKPPTEPTPSPQARRKLGLHRPNRTVRKDLSVSSDDSRRTESTPAGSETKDIRL. Over residues 332–344 the composition is skewed to basic residues; the sequence is ARRKLGLHRPNRT. A compositionally biased stretch (basic and acidic residues) spans 345-360; that stretch reads VRKDLSVSSDDSRRTE.

It belongs to the G-protein coupled receptor 1 family. Spleen, testis, kidney, liver, lung, heart and brain.

The protein localises to the cell membrane. Functionally, receptor for ATP and UTP coupled to G-proteins that activate a phosphatidylinositol-calcium second messenger system. The affinity range is UTP = ATP &gt; ATP-gamma-S &gt;&gt; 2-methylthio-ATP = ADP. This chain is P2Y purinoceptor 2 (P2ry2), found in Mus musculus (Mouse).